The primary structure comprises 160 residues: MTNTKGKRRGTRYMFSRPFRKHGVVPLATYMRIYKKGDIVDIKGMGTVQKGMPHKCYHGKTGRVYNVTQHAVGIIVNKQVKGKILAKRINVRIEHIKHSKSRDSFLKRVKENDQKKKEAKEKGTWVQLKRQPAPPREAHFVRTNGKEPELLEPIPYEFMA.

2 stretches are compositionally biased toward basic and acidic residues: residues 112–123 and 136–145; these read NDQKKKEAKEKG and REAHFVRTNG. A disordered region spans residues 112 to 145; sequence NDQKKKEAKEKGTWVQLKRQPAPPREAHFVRTNG.

Belongs to the eukaryotic ribosomal protein eL21 family. In terms of assembly, component of the large ribosomal subunit.

It is found in the cytoplasm. The protein resides in the cytosol. The protein localises to the endoplasmic reticulum. Its function is as follows. Component of the large ribosomal subunit. The ribosome is a large ribonucleoprotein complex responsible for the synthesis of proteins in the cell. This chain is Large ribosomal subunit protein eL21, found in Mus musculus (Mouse).